The primary structure comprises 529 residues: uncharacterized protein (529 aa).

The active-site Nucleophile is the Asp389. Glu392 is a catalytic residue. Asp459 functions as the Proton donor in the catalytic mechanism.

Belongs to the glycosyl hydrolase 31 family.

This is an uncharacterized protein from Pseudescherichia vulneris (Escherichia vulneris).